A 318-amino-acid polypeptide reads, in one-letter code: Mitochondrial coenzyme A transporter SLC25A42 (318 aa).

Solcar repeat units follow at residues 31–117 (RQVL…YKRI), 129–214 (LPPW…LKSL), and 224–312 (PYPF…MQIL). The next 6 membrane-spanning stretches (helical) occupy residues 33-53 (VLSSLLSGALAGALAKTAVAP), 89-109 (LWRGNSATMVRVIPYAAIQFS), 135-155 (LLAGALAGTTAASLTYPLDLV), 186-206 (LYFGFTPTVLGVIPYAGLSFF), 230-250 (MVFGACAGLIGQSASYPLDVV), and 293-313 (LKGPIAVGISFTTFDLMQILL).

Belongs to the mitochondrial carrier (TC 2.A.29) family. In terms of tissue distribution, widely expressed. Highly expressed in adipose, followed by hypothalamus and brain coronal sections containing corpus callosum, fornix, thalamus, hypothalamus, optic chiasm, pons, midbrain, and cerebellum.

It localises to the mitochondrion inner membrane. It catalyses the reaction ADP(out) + CoA(in) = ADP(in) + CoA(out). It carries out the reaction 3'-dephospho-CoA(in) + ADP(out) = 3'-dephospho-CoA(out) + ADP(in). The catalysed reaction is adenosine 3',5'-bisphosphate(in) + ADP(out) = adenosine 3',5'-bisphosphate(out) + ADP(in). The enzyme catalyses AMP(in) + ADP(out) = AMP(out) + ADP(in). It catalyses the reaction dADP(in) + ADP(out) = dADP(out) + ADP(in). It carries out the reaction ADP(in) + ATP(out) = ADP(out) + ATP(in). Mitochondrial carrier mediating the transport of coenzyme A (CoA) in mitochondria in exchange for intramitochondrial (deoxy)adenine nucleotides and adenosine 3',5'-diphosphate. This is Mitochondrial coenzyme A transporter SLC25A42 (Slc25a42) from Rattus norvegicus (Rat).